Consider the following 49-residue polypeptide: Large ribosomal subunit protein bL33 (49 aa).

This sequence belongs to the bacterial ribosomal protein bL33 family.

In Leuconostoc citreum (strain KM20), this protein is Large ribosomal subunit protein bL33.